The following is a 200-amino-acid chain: 3-isopropylmalate dehydratase small subunit (200 aa).

The protein belongs to the LeuD family. LeuD type 1 subfamily. In terms of assembly, heterodimer of LeuC and LeuD.

The catalysed reaction is (2R,3S)-3-isopropylmalate = (2S)-2-isopropylmalate. The protein operates within amino-acid biosynthesis; L-leucine biosynthesis; L-leucine from 3-methyl-2-oxobutanoate: step 2/4. Its function is as follows. Catalyzes the isomerization between 2-isopropylmalate and 3-isopropylmalate, via the formation of 2-isopropylmaleate. The chain is 3-isopropylmalate dehydratase small subunit from Photobacterium profundum (strain SS9).